Consider the following 303-residue polypeptide: Probable cell division protein WhiA (303 aa).

A DNA-binding region (H-T-H motif) is located at residues 272-303 (SLQQIADSLDFAITKSGVNHRLRKINKLAEDL).

This sequence belongs to the WhiA family.

In terms of biological role, involved in cell division and chromosome segregation. This chain is Probable cell division protein WhiA, found in Streptococcus equi subsp. zooepidemicus (strain MGCS10565).